The following is a 72-amino-acid chain: Phosphonoacetate hydrolase (72 aa).

As to quaternary structure, monomer. Unlike bacterial phosphonoacetate hydrolase, does not require zinc as a cofactor. serves as cofactor.

It catalyses the reaction phosphonoacetate + H2O = acetate + phosphate + H(+). With respect to regulation, unaffected by EDTA or Ca(2+), Co(2+), Cu(2+), Mg(2+), Mn(2+), Ni(2+) and Zn(2+). This Penicillium oxalicum protein is Phosphonoacetate hydrolase.